The sequence spans 370 residues: Actin-related protein 2/3 complex subunit 1A (370 aa).

WD repeat units lie at residues 6-45 (FLLE…WTKA), 50-89 (EHNG…WKPT), 140-179 (PIRS…VDEK), 202-241 (GTGG…QVST), 244-284 (TEFL…TFVS), and 322-365 (LHQN…SSIQ).

This sequence belongs to the WD repeat ARPC1 family. Probable component of the Arp2/3 complex in which it may replace ARPC1B.

The protein resides in the cytoplasm. It is found in the cytoskeleton. It localises to the nucleus. Its function is as follows. Probably functions as a component of the Arp2/3 complex which is involved in regulation of actin polymerization and together with an activating nucleation-promoting factor (NPF) mediates the formation of branched actin networks. In addition to its role in the cytoplasmic cytoskeleton, the Arp2/3 complex also promotes actin polymerization in the nucleus, thereby regulating gene transcription and repair of damaged DNA. This is Actin-related protein 2/3 complex subunit 1A (Arpc1a) from Mus musculus (Mouse).